Reading from the N-terminus, the 1082-residue chain is MAFQLDNGYYSHQALAMMRKKKTEPRNAGESSGTQQATGAPGRGPSQRPERAQQHGGGGWQPANPQYAQQAGRGGGQHQGRGGRYQGRGGPTSHQPGGGPVEYQAHEYYGRGVQRQGGMPQHRSGSGGHGVPASPSRTVPELHQASQDQYQATVVAPSPSRTGPSSLPVEASSEEVQHQFQELAIQGQSPTSQAIQPAPPSSKSVRFPMRPGKGTFGDRCIVKANHFFAELPDKDLHQYDVSITPEVPSRGVNRAVIGEIVTQYRQSHLGGRLPVYDGRKSLYTAGPLPFTSRTFDVILQDEEESLAVGQGAQRRERPFKVVIKFAARADLHHLAMFLAGRQADAPQEALQVLDIVLRELPTARYSPVARSFYSPNLGRRQQLGEGLESWRGFYQSIRPTQMGLSLNIDMSSTAFIEPLPVIDFVAQLLNRDISVRPLSDADRVKIKKALRGVKVEVTHRGNMRRKYRISGLTSQATRELSFPIDNHGTVKTVVQYFQETYGFNIKHTTLPCLQVGNQQRPNYLPMEVCKIVEGQRYSKRLNEKQITALLKVTCQRPQERELDILQTVHHNAYHQDPYAQEFGIRIDERLASVEARVLPPPWLKYHDSGREKDVLPRIGQWNMMNKKMVNGGRVNNWTCINFSRHVQDNAARSFCRELAIMCQISGMDFSIDPVVPLVTARPEHVERALKARYQEAMNILKPQGGELDLLIAILPDNNGSLYGDLKRICETDLGLVSQCCLTKHVFKMSKQYLANVALKINVKVGGRNTVLVDALTRRIPLVSDRPTIIFGADVTHPHPGEDSSPSIAAVVASQDWPEVTKYAGLVSAQAHRQELIQDLFKVWKDPQRGTVSGGMIRELLISFKRATGQKPQRIIFYRDGVSEGQFYQVLFYELDAIRKACASLEADYQPPVTFVVVQKRHHTRLFANNHKDQRTVDRSGNILPGTVVDSKICHPTEFDFYLCSHAGIQGTSRPAHYHVLWDENKFTADGLQTLTNNLCYTYARCTRSVSIVPPAYYAHLAAFRARFYMEPDTSDSGSMASGAHTRGGGPLPGARSTKPAGNVAVRPLPDLKENVKRVMFYC.

Disordered stretches follow at residues 17-148 (MMRK…ASQD) and 187-208 (GQSP…VRFP). A compositionally biased stretch (polar residues) spans 29–38 (GESSGTQQAT). Over residues 72–100 (GRGGGQHQGRGGRYQGRGGPTSHQPGGGP) the composition is skewed to gly residues. Positions 420–533 (PVIDFVAQLL…LPMEVCKIVE (114 aa)) constitute a PAZ domain. Residues 709-1030 (LLIAILPDNN…AAFRARFYME (322 aa)) enclose the Piwi domain. Residues 1036–1065 (SGSMASGAHTRGGGPLPGARSTKPAGNVAV) form a disordered region.

It belongs to the argonaute family. Ago subfamily.

Functionally, probably involved in the RNA silencing pathway. May bind to short RNAs such as microRNAs (miRNAs) or short interfering RNAs (siRNAs), and represses the translation of mRNAs which are complementary to them. The sequence is that of Protein argonaute 1A (AGO1A) from Oryza sativa subsp. japonica (Rice).